The primary structure comprises 196 residues: GTP cyclohydrolase 1 (196 aa).

Zn(2+) is bound by residues C84, H87, and C157.

Belongs to the GTP cyclohydrolase I family. In terms of assembly, toroid-shaped homodecamer, composed of two pentamers of five dimers.

The catalysed reaction is GTP + H2O = 7,8-dihydroneopterin 3'-triphosphate + formate + H(+). The protein operates within cofactor biosynthesis; 7,8-dihydroneopterin triphosphate biosynthesis; 7,8-dihydroneopterin triphosphate from GTP: step 1/1. In Corynebacterium glutamicum (strain R), this protein is GTP cyclohydrolase 1.